The chain runs to 217 residues: Thymidylate kinase (217 aa).

14 to 21 lines the ATP pocket; it reads GNEGSGKT.

Belongs to the thymidylate kinase family.

It carries out the reaction dTMP + ATP = dTDP + ADP. Functionally, phosphorylation of dTMP to form dTDP in both de novo and salvage pathways of dTTP synthesis. The chain is Thymidylate kinase from Orientia tsutsugamushi (strain Ikeda) (Rickettsia tsutsugamushi).